We begin with the raw amino-acid sequence, 425 residues long: CinA-like protein (425 aa).

The protein belongs to the CinA family.

The protein is CinA-like protein of Shewanella sp. (strain MR-4).